The sequence spans 374 residues: Aclacinomycin 10-hydroxylase RdmB (374 aa).

Positions 171, 190, 213, 240, 241, and 255 each coordinate S-adenosyl-L-methionine.

This sequence belongs to the class I-like SAM-binding methyltransferase superfamily. Cation-independent O-methyltransferase family. Homodimer. Homotetramer in solution. Tetramers might not be very stable in solution.

It carries out the reaction 15-demethylaclacinomycin T + AH2 + O2 = 10-decarboxymethylaclacinomycin T + A + CO2 + H2O. The enzyme catalyses 10-carboxy-13-deoxycarminomycin + AH2 + O2 + H(+) = 10-hydroxy-13-deoxycarminomycin + A + CO2 + H2O. The catalysed reaction is 10-hydroxy-13-deoxycarminomycin + S-adenosyl-L-methionine = 10-hydroxy-13-deoxydaunorubicin + S-adenosyl-L-homocysteine + H(+). The protein operates within antibiotic biosynthesis; rhodomycin biosynthesis. Its pathway is antibiotic biosynthesis; aclacinomycin biosynthesis. Its activity is regulated as follows. The hydroxylation reaction requires S-adenosyl-L-methionine (SAM) as a cofactor. S-adenosine-L-homocysteine and sinefungin (a SAM analog) can also support the decarboxylative hydroxylation activity with 10-carboxy-13-deoxycarminomycin as substrate. SAM and its analogs are considered an essential structural ligand to maintain ternary structural integrity and the proper binding mode and orientation of electron-rich substrates during decarboxylative hydroxylation of C-10 by RdmB. Its function is as follows. Involved in the biosynthesis of anthracyclines, an important group of aromatic polyketide antibiotics used in cancer chemotherapy. Acts as a 10-hydroxylase to catalyze a decarboxylative hydroxylation reaction on anthracyclines. During biosynthesis of rhodomycin, it catalyzes the removal of the carboxylic group at the C-10 position of 15-demethoxy-epsilon-rhodomycin coupled to hydroxylation at the same C-10 position to yield beta-rhodomycin. In vitro, can also catalyze the removal of the carboxylic group at the C-10 position of 15-demethoxyaclacinomycin T coupled to hydroxylation at the same C-10 position to yield 10-decarboxymethylaclacinomycin T. It can also use 10-carboxy-13-deoxycarminomycin, an analog of 15-demethoxy-epsilon-rhodomycin, to yield 10-hydroxy-13-deoxycarminomycin. In addition to its hydroxylation activity, it can act in vitro as a S-adenosyl-L-methionine-dependent O-methyltransferase and catalyze the 4-O-methylation of 10-hydroxy-13-deoxycarminomycin to 10-hydroxy-13-deoxydaunorubicin. The triglycosyl group of anthracyclines prevents the methylation reaction. The chain is Aclacinomycin 10-hydroxylase RdmB from Streptomyces purpurascens.